A 303-amino-acid polypeptide reads, in one-letter code: Holdfast attachment protein D (303 aa).

A compositionally biased stretch (polar residues) spans 266-281 (SARSTMSGPKSCSTTF). The interval 266–303 (SARSTMSGPKSCSTTFRPIRAAASRRPPASAGTRAMTR) is disordered. The span at 282-303 (RPIRAAASRRPPASAGTRAMTR) shows a compositional bias: low complexity.

Its subcellular location is the cell outer membrane. In terms of biological role, involved in attachment of the holdfast to the cell. The holdfast is a structure that allows the bacteria to firmly adhere to surfaces. The chain is Holdfast attachment protein D (hfaD) from Caulobacter vibrioides (strain ATCC 19089 / CIP 103742 / CB 15) (Caulobacter crescentus).